Reading from the N-terminus, the 359-residue chain is DNA replication and repair protein RecF (359 aa).

Position 30-37 (30-37 (GNNGSGKT)) interacts with ATP.

It belongs to the RecF family.

The protein localises to the cytoplasm. The RecF protein is involved in DNA metabolism; it is required for DNA replication and normal SOS inducibility. RecF binds preferentially to single-stranded, linear DNA. It also seems to bind ATP. The sequence is that of DNA replication and repair protein RecF from Haemophilus influenzae (strain 86-028NP).